A 281-amino-acid chain; its full sequence is NADPH-dependent 7-cyano-7-deazaguanine reductase (281 aa).

87-89 (IES) contacts substrate. 89 to 90 (SK) provides a ligand contact to NADPH. The active-site Thioimide intermediate is the Cys188. Residue Asp195 is the Proton donor of the active site. 227–228 (HE) is a substrate binding site. 256–257 (RG) is an NADPH binding site.

Belongs to the GTP cyclohydrolase I family. QueF type 2 subfamily. Homodimer.

It is found in the cytoplasm. The enzyme catalyses 7-aminomethyl-7-carbaguanine + 2 NADP(+) = 7-cyano-7-deazaguanine + 2 NADPH + 3 H(+). It participates in tRNA modification; tRNA-queuosine biosynthesis. Its function is as follows. Catalyzes the NADPH-dependent reduction of 7-cyano-7-deazaguanine (preQ0) to 7-aminomethyl-7-deazaguanine (preQ1). In Photobacterium profundum (strain SS9), this protein is NADPH-dependent 7-cyano-7-deazaguanine reductase.